A 330-amino-acid polypeptide reads, in one-letter code: DNA-directed RNA polymerase subunit alpha (330 aa).

The segment at 1–229 (MKNIKFIKPF…DHFNVLVELS (229 aa)) is alpha N-terminal domain (alpha-NTD). Residues 245 to 330 (AHNSVLDLEI…HSVEEDKDKH (86 aa)) are alpha C-terminal domain (alpha-CTD).

It belongs to the RNA polymerase alpha chain family. As to quaternary structure, homodimer. The RNAP catalytic core consists of 2 alpha, 1 beta, 1 beta' and 1 omega subunit. When a sigma factor is associated with the core the holoenzyme is formed, which can initiate transcription.

The enzyme catalyses RNA(n) + a ribonucleoside 5'-triphosphate = RNA(n+1) + diphosphate. In terms of biological role, DNA-dependent RNA polymerase catalyzes the transcription of DNA into RNA using the four ribonucleoside triphosphates as substrates. The chain is DNA-directed RNA polymerase subunit alpha from Onion yellows phytoplasma (strain OY-M).